A 637-amino-acid polypeptide reads, in one-letter code: Clathrin coat assembly protein AP180A (637 aa).

The ENTH domain maps to 1-126 (MTTYFKLVKG…REFGKIKKDY (126 aa)). Residues 555-637 (TQNHLQQQQQ…YANNLNLIDM (83 aa)) are disordered. Composition is skewed to low complexity over residues 560–579 (QQQQ…QPQQ) and 600–622 (QPQN…TQQP). Residues 587-637 (AGANPVTNITGTVQPQNFPFYPQQQPQPEQSQTQQPVLGNQYANNLNLIDM) are clathrin-binding. Polar residues predominate over residues 623–637 (VLGNQYANNLNLIDM).

This sequence belongs to the AP180 family. As to quaternary structure, interacts with PAN1 and the clathrin heavy and light chains CHC1 and CLC1.

It localises to the bud. It is found in the bud neck. The protein resides in the cell membrane. Its subcellular location is the cytoplasm. Functionally, involved in endocytosis and clathrin cage assembly. This Saccharomyces cerevisiae (strain ATCC 204508 / S288c) (Baker's yeast) protein is Clathrin coat assembly protein AP180A (YAP1801).